The primary structure comprises 84 residues: UPF0473 protein CLD_2004 (84 aa).

This sequence belongs to the UPF0473 family.

This chain is UPF0473 protein CLD_2004, found in Clostridium botulinum (strain Okra / Type B1).